The chain runs to 469 residues: Phosphoglucosamine mutase (469 aa).

S117 (phosphoserine intermediate) is an active-site residue. Residues S117, D263, D265, and D267 each coordinate Mg(2+). At S117 the chain carries Phosphoserine.

Belongs to the phosphohexose mutase family. Mg(2+) serves as cofactor. Post-translationally, activated by phosphorylation.

The enzyme catalyses alpha-D-glucosamine 1-phosphate = D-glucosamine 6-phosphate. Functionally, catalyzes the conversion of glucosamine-6-phosphate to glucosamine-1-phosphate. This is Phosphoglucosamine mutase from Anaeromyxobacter sp. (strain Fw109-5).